The primary structure comprises 226 residues: NADH-ubiquinone oxidoreductase chain 6 (226 aa).

The next 5 helical transmembrane spans lie at Ser2–Leu22, Ile28–Val48, Ile56–Ile76, Tyr90–Thr110, and Ile169–Thr189.

The protein belongs to the complex I subunit 6 family.

Its subcellular location is the mitochondrion membrane. It carries out the reaction a ubiquinone + NADH + 5 H(+)(in) = a ubiquinol + NAD(+) + 4 H(+)(out). In terms of biological role, core subunit of the mitochondrial membrane respiratory chain NADH dehydrogenase (Complex I) that is believed to belong to the minimal assembly required for catalysis. Complex I functions in the transfer of electrons from NADH to the respiratory chain. The immediate electron acceptor for the enzyme is believed to be ubiquinone. This is NADH-ubiquinone oxidoreductase chain 6 (nad6) from Dictyostelium discoideum (Social amoeba).